Here is a 103-residue protein sequence, read N- to C-terminus: Large ribosomal subunit protein uL24 (103 aa).

Belongs to the universal ribosomal protein uL24 family. In terms of assembly, part of the 50S ribosomal subunit.

One of two assembly initiator proteins, it binds directly to the 5'-end of the 23S rRNA, where it nucleates assembly of the 50S subunit. Functionally, one of the proteins that surrounds the polypeptide exit tunnel on the outside of the subunit. This Vesicomyosocius okutanii subsp. Calyptogena okutanii (strain HA) protein is Large ribosomal subunit protein uL24.